An 89-amino-acid chain; its full sequence is LYR motif-containing protein 4 (89 aa).

Belongs to the complex I LYR family.

It localises to the mitochondrion. Its subcellular location is the nucleus. Its pathway is cofactor biosynthesis; iron-sulfur cluster biosynthesis. In terms of biological role, required for nuclear and mitochondrial iron-sulfur protein biosynthesis. The polypeptide is LYR motif-containing protein 4 (lyrm4) (Xenopus laevis (African clawed frog)).